Here is a 384-residue protein sequence, read N- to C-terminus: Probable inactive linolenate hydroperoxide lyase (384 aa).

Cys-346 serves as a coordination point for heme.

Belongs to the cytochrome P450 family. It depends on heme as a cofactor. As to expression, expressed in roots, leaves, flowers and siliques.

The protein is Probable inactive linolenate hydroperoxide lyase of Arabidopsis thaliana (Mouse-ear cress).